The primary structure comprises 161 residues: Nucleoside diphosphate kinase (161 aa).

Lysine 12, phenylalanine 60, arginine 88, threonine 94, and arginine 105 together coordinate ATP. Histidine 121 acts as the Pros-phosphohistidine intermediate in catalysis.

It belongs to the NDK family. Mg(2+) serves as cofactor.

It is found in the cytoplasm. The enzyme catalyses a 2'-deoxyribonucleoside 5'-diphosphate + ATP = a 2'-deoxyribonucleoside 5'-triphosphate + ADP. It carries out the reaction a ribonucleoside 5'-diphosphate + ATP = a ribonucleoside 5'-triphosphate + ADP. Functionally, major role in the synthesis of nucleoside triphosphates other than ATP. The ATP gamma phosphate is transferred to the NDP beta phosphate via a ping-pong mechanism, using a phosphorylated active-site intermediate. The polypeptide is Nucleoside diphosphate kinase (Pyrococcus furiosus (strain ATCC 43587 / DSM 3638 / JCM 8422 / Vc1)).